We begin with the raw amino-acid sequence, 102 residues long: Parathymosin (102 aa).

Residues 1-102 form a disordered region; it reads MSEKSVEAAA…RQKTENGASA (102 aa). Position 2 is an N-acetylserine (Ser2). Ser2 carries the phosphoserine modification. The residue at position 4 (Lys4) is an N6-acetyllysine. 2 positions are modified to phosphoserine: Ser5 and Ser13. The span at 13 to 37 shows a compositional bias: basic and acidic residues; the sequence is SAKDLKEKKEKVEEKAGRKERKKEV. Lys15 carries the post-translational modification N6-acetyllysine. Residues 38–76 show a composition bias toward acidic residues; that stretch reads VEEEENGAEEEEEETAEDGEEEDDGDEEDEEEEEEEDEG. Residue Thr52 is modified to Phosphothreonine. N6-acetyllysine is present on Lys92.

This sequence belongs to the pro/parathymosin family.

Its function is as follows. Parathymosin may mediate immune function by blocking the effect of prothymosin alpha which confers resistance to certain opportunistic infections. The protein is Parathymosin (PTMS) of Bos taurus (Bovine).